The sequence spans 500 residues: Cytochrome P450 81F1 (500 aa).

Residues 1-21 (MLYFILLPLLFLVISYKFLYS) form a helical membrane-spanning segment. A Glycyl lysine isopeptide (Lys-Gly) (interchain with G-Cter in ubiquitin) cross-link involves residue K248. Position 438 (C438) interacts with heme.

It belongs to the cytochrome P450 family. It depends on heme as a cofactor.

It localises to the membrane. The protein operates within secondary metabolite biosynthesis. Its function is as follows. Involved in indole glucosinolate biosynthesis. Catalyzes hydroxylation reactions of the glucosinolate indole ring. Converts indol-3-yl-methylglucosinolate (I3M) to 4-hydroxy-indol-3-yl-methylglucosinolate (4OH-I3M) and/or 1-hydroxy-indol-3-yl-methylglucosinolate (1OH-I3M) intermediates. These hydroxy intermediates are converted to 4-methoxy-indol-3-yl-methylglucosinolate (4MO-I3M) and 1-methoxy-indol-3-yl-methylglucosinolate (1MO-I3M) by indole glucosinolate methyltransferase 1 and 2 (IGMT1 and IGMT2). The sequence is that of Cytochrome P450 81F1 from Arabidopsis thaliana (Mouse-ear cress).